The following is a 346-amino-acid chain: Probable RNA methyltransferase Pmen_2155 (346 aa).

Residue Glu-91 is the Proton acceptor of the active site. Residues 94–320 (LLPRDGLCIS…TKVRNSAGQD (227 aa)) enclose the Radical SAM core domain. Residues Cys-101 and Cys-325 are joined by a disulfide bond. Residues Cys-108, Cys-112, and Cys-115 each coordinate [4Fe-4S] cluster. S-adenosyl-L-methionine is bound by residues 153 to 154 (GE), Ser-183, 206 to 208 (SLH), and Asn-282. Cys-325 acts as the S-methylcysteine intermediate in catalysis.

The protein belongs to the radical SAM superfamily. RlmN family. It depends on [4Fe-4S] cluster as a cofactor.

The protein localises to the cytoplasm. The sequence is that of Probable RNA methyltransferase Pmen_2155 from Ectopseudomonas mendocina (strain ymp) (Pseudomonas mendocina).